The following is a 219-amino-acid chain: Small ribosomal subunit protein uS3 (219 aa).

One can recognise a KH type-2 domain in the interval 38–106 (IRKYINTKLA…KVHINIVEIK (69 aa)).

It belongs to the universal ribosomal protein uS3 family. Part of the 30S ribosomal subunit. Forms a tight complex with proteins S10 and S14.

Binds the lower part of the 30S subunit head. Binds mRNA in the 70S ribosome, positioning it for translation. The sequence is that of Small ribosomal subunit protein uS3 from Latilactobacillus sakei subsp. sakei (strain 23K) (Lactobacillus sakei subsp. sakei).